Here is a 1481-residue protein sequence, read N- to C-terminus: Chromosome partition protein MukB (1481 aa).

Position 34–41 (34–41) interacts with ATP; that stretch reads GGNGAGKS. Coiled-coil stretches lie at residues 338 to 480, 509 to 604, 780 to 805, 835 to 1116, and 1210 to 1265; these read SLVQ…QAYQ, QHLA…APVW, RAARENRLEALYQERDSLAERYATLS, EAEI…AKAG, and EAIE…LQAV. Residues 666 to 783 form a flexible hinge region; it reads PSGAEDSRMI…EVPLFGRAAR (118 aa).

Belongs to the SMC family. MukB subfamily. As to quaternary structure, homodimerization via its hinge domain. Binds to DNA via its C-terminal region. Interacts, and probably forms a ternary complex, with MukE and MukF via its C-terminal region. The complex formation is stimulated by calcium or magnesium. Interacts with tubulin-related protein FtsZ.

The protein localises to the cytoplasm. It is found in the nucleoid. In terms of biological role, plays a central role in chromosome condensation, segregation and cell cycle progression. Functions as a homodimer, which is essential for chromosome partition. Involved in negative DNA supercoiling in vivo, and by this means organize and compact chromosomes. May achieve or facilitate chromosome segregation by condensation DNA from both sides of a centrally located replisome during cell division. This is Chromosome partition protein MukB from Yersinia enterocolitica serotype O:8 / biotype 1B (strain NCTC 13174 / 8081).